Here is a 679-residue protein sequence, read N- to C-terminus: Glycine--tRNA ligase beta subunit (679 aa).

Belongs to the class-II aminoacyl-tRNA synthetase family. As to quaternary structure, tetramer of two alpha and two beta subunits.

It localises to the cytoplasm. It carries out the reaction tRNA(Gly) + glycine + ATP = glycyl-tRNA(Gly) + AMP + diphosphate. The protein is Glycine--tRNA ligase beta subunit of Thermodesulfovibrio yellowstonii (strain ATCC 51303 / DSM 11347 / YP87).